The chain runs to 186 residues: Threonylcarbamoyl-AMP synthase (186 aa).

One can recognise a YrdC-like domain in the interval 5–186 (TQSINDAVKC…DAITGEILRL (182 aa)).

Belongs to the SUA5 family. TsaC subfamily.

The protein localises to the cytoplasm. It catalyses the reaction L-threonine + hydrogencarbonate + ATP = L-threonylcarbamoyladenylate + diphosphate + H2O. Required for the formation of a threonylcarbamoyl group on adenosine at position 37 (t(6)A37) in tRNAs that read codons beginning with adenine. Catalyzes the conversion of L-threonine, HCO(3)(-)/CO(2) and ATP to give threonylcarbamoyl-AMP (TC-AMP) as the acyladenylate intermediate, with the release of diphosphate. The sequence is that of Threonylcarbamoyl-AMP synthase from Coxiella burnetii (strain RSA 331 / Henzerling II).